The sequence spans 1060 residues: Protein transport protein Sec16B (1060 aa).

The disordered stretch occupies residues 1-86 (MELWAPQRLP…GDWHQPVSGV (86 aa)). The tract at residues 34–224 (RPVPHSWHNG…PSLASESNLL (191 aa)) is required for endoplasmic reticulum localization. The span at 41-50 (HNGERFHQWQ) shows a compositional bias: basic and acidic residues. A compositionally biased stretch (polar residues) spans 51-60 (DNRGSPQPQQ). Phosphoserine occurs at positions 55, 143, 167, 188, and 191. Disordered regions lie at residues 163 to 236 (ENQH…SSSY), 245 to 264 (APER…QADV), 711 to 733 (KVAG…GGTT), 770 to 796 (PSPQ…GTPR), and 834 to 1060 (PGEN…TQPC). Polar residues-rich tracts occupy residues 165-195 (QHSP…NSGQ) and 213-222 (NKPSLASESN). Residues 223–236 (LLQQRESGLSSSSY) are compositionally biased toward low complexity. Phosphoserine is present on residues S254 and S258. The central conserved domain (CCD); required for localization to endoplasmic reticulum exit sites stretch occupies residues 271 to 713 (APMKFYIPHV…LRRQLEQKVA (443 aa)). The span at 837–847 (NTVSQETSQPP) shows a compositional bias: polar residues. Residue T858 is modified to Phosphothreonine. 5 positions are modified to phosphoserine: S868, S871, S874, S882, and S883. 2 stretches are compositionally biased toward basic and acidic residues: residues 875 to 890 (AKED…DKNS) and 899 to 908 (KLGDGKEHTK). Residues 909-918 (SSGFGWFSWF) show a composition bias toward low complexity. Positions 930 to 941 (GDEDSSDSPDSE) are enriched in acidic residues. The segment covering 991 to 1001 (AAAGAGVGGLS) has biased composition (gly residues). A compositionally biased stretch (polar residues) spans 1031-1046 (NPSQVPQLPTATSLNR).

It belongs to the SEC16 family. SEC16A and SEC16B are each present in multiple copies in a heteromeric complex. Interacts with TFG. Interacts with SEC13. Ubiquitous.

It is found in the endoplasmic reticulum membrane. The protein localises to the golgi apparatus membrane. Plays a role in the organization of the endoplasmic reticulum exit sites (ERES), also known as transitional endoplasmic reticulum (tER). Required for secretory cargo traffic from the endoplasmic reticulum to the Golgi apparatus. Involved in peroxisome biogenesis. Regulates the transport of peroxisomal biogenesis factors PEX3 and PEX16 from the ER to peroxisomes. In Homo sapiens (Human), this protein is Protein transport protein Sec16B (SEC16B).